The following is a 119-amino-acid chain: Large ribosomal subunit protein uL18 (119 aa).

Residues 54 to 76 (LTSASTLADDVEGETPTEESRSV) form a disordered region.

It belongs to the universal ribosomal protein uL18 family. As to quaternary structure, part of the 50S ribosomal subunit; part of the 5S rRNA/L5/L18/L25 subcomplex. Contacts the 5S and 23S rRNAs.

This is one of the proteins that bind and probably mediate the attachment of the 5S RNA into the large ribosomal subunit, where it forms part of the central protuberance. This chain is Large ribosomal subunit protein uL18, found in Salinibacter ruber (strain DSM 13855 / M31).